A 435-amino-acid chain; its full sequence is UPF0053 protein Rv2366c (435 aa).

Residues 1–185 enclose the CNNM transmembrane domain; sequence MTGYYQLLGS…QQRGVVAADE (185 aa). The next 2 membrane-spanning stretches (helical) occupy residues 7 to 27 and 89 to 109; these read LLGS…DAAI and VWGL…VVGV. 2 consecutive CBS domains span residues 204-267 and 272-329; these read MVPR…GRET and VMRP…IADE.

The protein belongs to the UPF0053 family.

It localises to the cell membrane. The polypeptide is UPF0053 protein Rv2366c (Mycobacterium tuberculosis (strain ATCC 25618 / H37Rv)).